We begin with the raw amino-acid sequence, 715 residues long: MATAVSSYNDIQLETIQEVSCSTSCSSNSTTSSSSNSPKQNKVSPGYRNKPQQQQHKKGHKMGNYLLGKTIGSGTSSKVKIGTNILTGKQYAIKITKPKRIKERKEIEREISILKRLKHDNIIQLHDAIYEDDVGRICLILELVSGGELFDYIVARGRLSEKEGRKFFRQMLCGLIYCHSNMVCHRDLKLENLLVDEDGNLKISDFGYSNIIKPGNLLSTFCGSPVYAPPEILLEKRYNGNEVDIWSMGVILYAMVTGQLPWTLTDGVQVEGMDRLLRGEFKYPSHVILSDDVKDLINRMIVAEPVERATLDEIKTHVWVNKGYDMEPDQEYNKKVSDRLEKEQQQQTPQHQQTQQQLQPQSQLQQHSPRSPKPLFVDTIIGSNRPLNQSSPNLTIPQNKQYVSSNSNINININNNNNNNSNVINNSIKPIQFNSSSCLDEKKINCSAPTSPHSISPQFISPSPSTSTTPPLSPLSVSGQRSPPTFSSNPNIGHIPNNNHNSLSSSQNNINTSGKNQYHHHHHHQNHHSTSLFHNIFKKRQSVTSVSANSSPVIVSSNGGLNNNNHNNILHVSSSNINVDGASASAPQFSSSSSKRRFSLEDIVKAITIRSGKGKNPKIRSMKGPFNSGTTTMLNPIQLIEHIEENLNSTQISYRRNFYVFDCKTLCPRNETINFEIEVCKVNGMDMYGIKFKRLSGDAWSYSSSCIKIVESLKL.

The span at 24–37 shows a compositional bias: low complexity; that stretch reads SCSSNSTTSSSSNS. Residues 24–65 form a disordered region; the sequence is SCSSNSTTSSSSNSPKQNKVSPGYRNKPQQQQHKKGHKMGNY. The Protein kinase domain occupies 65 to 320; it reads YLLGKTIGSG…LDEIKTHVWV (256 aa). Residues 71–79 and Lys-94 each bind ATP; that span reads IGSGTSSKV. Asp-187 functions as the Proton acceptor in the catalytic mechanism. A compositionally biased stretch (basic and acidic residues) spans 335 to 344; that stretch reads KVSDRLEKEQ. Disordered stretches follow at residues 335–399 and 446–530; these read KVSD…IPQN and CSAP…HHST. Positions 345-368 are enriched in low complexity; the sequence is QQQTPQHQQTQQQLQPQSQLQQHS. Residues 381–399 show a composition bias toward polar residues; sequence IGSNRPLNQSSPNLTIPQN. Low complexity-rich tracts occupy residues 451–478 and 487–513; these read SPHSISPQFISPSPSTSTTPPLSPLSVS and SSNPNIGHIPNNNHNSLSSSQNNINTS. Basic residues predominate over residues 517-527; that stretch reads QYHHHHHHQNH. A KA1 domain is found at 666 to 715; that stretch reads LCPRNETINFEIEVCKVNGMDMYGIKFKRLSGDAWSYSSSCIKIVESLKL.

Belongs to the protein kinase superfamily. CAMK Ser/Thr protein kinase family. SNF1 subfamily.

It catalyses the reaction L-seryl-[protein] + ATP = O-phospho-L-seryl-[protein] + ADP + H(+). It carries out the reaction L-threonyl-[protein] + ATP = O-phospho-L-threonyl-[protein] + ADP + H(+). This is Probable serine/threonine-protein kinase MARK-B (mrkB) from Dictyostelium discoideum (Social amoeba).